We begin with the raw amino-acid sequence, 20 residues long: Hemocyanin subunit 6 (20 aa).

It belongs to the tyrosinase family. Hemocyanin subfamily. Hemolymph.

The protein resides in the secreted. It localises to the extracellular space. Its function is as follows. Hemocyanins are copper-containing oxygen carriers occurring freely dissolved in the hemolymph of many mollusks and arthropods. This is Hemocyanin subunit 6 from Homarus americanus (American lobster).